We begin with the raw amino-acid sequence, 328 residues long: Octanoyltransferase, mitochondrial (328 aa).

Residues 108 to 312 (MKPNPIILTF…EMTKLLGIKT (205 aa)) form the BPL/LPL catalytic domain. Substrate is bound by residues 162–169 (RGGQVTFH), 241–243 (SVG), and 254–256 (GVA). The Acyl-thioester intermediate role is filled by Cys272.

Belongs to the LipB family.

The protein resides in the mitochondrion. The enzyme catalyses octanoyl-[ACP] + L-lysyl-[protein] = N(6)-octanoyl-L-lysyl-[protein] + holo-[ACP] + H(+). Its pathway is protein modification; protein lipoylation via endogenous pathway; protein N(6)-(lipoyl)lysine from octanoyl-[acyl-carrier-protein]: step 1/2. In terms of biological role, catalyzes the transfer of endogenously produced octanoic acid from octanoyl-acyl-carrier-protein onto the lipoyl domains of lipoate-dependent enzymes. Lipoyl-ACP can also act as a substrate although octanoyl-ACP is likely to be the physiological substrate. The polypeptide is Octanoyltransferase, mitochondrial (LIP2) (Saccharomyces cerevisiae (strain ATCC 204508 / S288c) (Baker's yeast)).